A 294-amino-acid polypeptide reads, in one-letter code: Cytidine deaminase (294 aa).

2 consecutive CMP/dCMP-type deaminase domains span residues 48 to 168 (DEDA…FGPK) and 186 to 294 (LTGD…VLLA). A substrate-binding site is contributed by 89 to 91 (NME). His-102 contacts Zn(2+). Residue Glu-104 is the Proton donor of the active site. The Zn(2+) site is built by Cys-129 and Cys-132.

The protein belongs to the cytidine and deoxycytidylate deaminase family. Homodimer. It depends on Zn(2+) as a cofactor.

It carries out the reaction cytidine + H2O + H(+) = uridine + NH4(+). It catalyses the reaction 2'-deoxycytidine + H2O + H(+) = 2'-deoxyuridine + NH4(+). This enzyme scavenges exogenous and endogenous cytidine and 2'-deoxycytidine for UMP synthesis. The polypeptide is Cytidine deaminase (Escherichia coli (strain ATCC 8739 / DSM 1576 / NBRC 3972 / NCIMB 8545 / WDCM 00012 / Crooks)).